Consider the following 361-residue polypeptide: Outer membrane protein P2 (361 aa).

An N-terminal signal peptide occupies residues 1 to 20 (MKKTLAALIVGAFAASAANA).

The protein belongs to the Gram-negative porin family. Homotrimer.

It is found in the cell outer membrane. Forms pores that allow passive diffusion of small molecules across the outer membrane. This is Outer membrane protein P2 (ompP2) from Haemophilus influenzae.